Reading from the N-terminus, the 72-residue chain is DNA-directed RNA polymerase subunit epsilon (72 aa).

The protein belongs to the RNA polymerase subunit epsilon family. RNAP is composed of a core of 2 alpha, a beta and a beta' subunit. The core is associated with a delta subunit, and at least one of epsilon or omega. When a sigma factor is associated with the core the holoenzyme is formed, which can initiate transcription.

It carries out the reaction RNA(n) + a ribonucleoside 5'-triphosphate = RNA(n+1) + diphosphate. A non-essential component of RNA polymerase (RNAP). In Levilactobacillus brevis (strain ATCC 367 / BCRC 12310 / CIP 105137 / JCM 1170 / LMG 11437 / NCIMB 947 / NCTC 947) (Lactobacillus brevis), this protein is DNA-directed RNA polymerase subunit epsilon.